Here is a 224-residue protein sequence, read N- to C-terminus: Urease accessory protein UreF (224 aa).

Belongs to the UreF family. UreD, UreF and UreG form a complex that acts as a GTP-hydrolysis-dependent molecular chaperone, activating the urease apoprotein by helping to assemble the nickel containing metallocenter of UreC. The UreE protein probably delivers the nickel.

The protein resides in the cytoplasm. Required for maturation of urease via the functional incorporation of the urease nickel metallocenter. The chain is Urease accessory protein UreF from Azotobacter vinelandii (strain DJ / ATCC BAA-1303).